The following is a 360-amino-acid chain: Hydroxycarboxylic acid receptor 2 (360 aa).

Residues 1 to 30 (MSKQNHFLVINGKNCCVFRDENIAKVLPPV) lie on the Extracellular side of the membrane. A helical transmembrane segment spans residues 31–51 (LGLEFVFGLLGNGLALWIFCF). The Cytoplasmic segment spans residues 52–60 (HLKSWKSSR). Residues 61–81 (IFLFNLAVADFLLIICLPFLT) form a helical membrane-spanning segment. Residues 82–98 (DNYVQNWDWRFGSIPCR) are Extracellular-facing. Cys-97 and Cys-174 are disulfide-bonded. Residues 99-119 (VMLFMLAMNRQGSIIFLTVVA) traverse the membrane as a helical segment. Residues 120 to 140 (VDRYFRVVHPHHFLNKISNRT) lie on the Cytoplasmic side of the membrane. The chain crosses the membrane as a helical span at residues 141–161 (AAIISCFLWGITIGLTVHLLY). Topologically, residues 162–189 (TDMMTRNGDANLCSSFSICYTFRWHDAM) are extracellular. A helical membrane pass occupies residues 190 to 210 (FLLEFFLPLGIILFCSGRIIW). Residues 211-226 (SLRQRQMDRHVKIKRA) are Cytoplasmic-facing. Residues 227-247 (INFIMVVAIVFVICFLPSVAV) traverse the membrane as a helical segment. Residues 248–270 (RIRIFWLLYKHNVRNCDIYSSVD) lie on the Extracellular side of the membrane. Residues 271–291 (LAFFTTLSFTYMNSMLDPVVY) traverse the membrane as a helical segment. Over 292–360 (YFSSPSFPNF…SPPYLASTSR (69 aa)) the chain is Cytoplasmic. The disordered stretch occupies residues 320 to 360 (NNRSTSVELTGDPSTIRSIPGALMTDPSEPGSPPYLASTSR). Positions 321-336 (NRSTSVELTGDPSTIR) are enriched in polar residues. A Phosphoserine modification is found at Ser-325.

It belongs to the G-protein coupled receptor 1 family. In terms of tissue distribution, expressed in adipose tissue, lung and spleen.

The protein resides in the cell membrane. Functionally, acts as a high affinity receptor for both nicotinic acid (also known as niacin) and (D)-beta-hydroxybutyrate and mediates increased adiponectin secretion and decreased lipolysis through G(i)-protein-mediated inhibition of adenylyl cyclase. This pharmacological effect requires nicotinic acid doses that are much higher than those provided by a normal diet. Mediates nicotinic acid-induced apoptosis in mature neutrophils. Receptor activation by nicotinic acid results in reduced cAMP levels which may affect activity of cAMP-dependent protein kinase A and phosphorylation of target proteins, leading to neutrophil apoptosis. The rank order of potency for the displacement of nicotinic acid binding is 5-methyl pyrazole-3-carboxylic acid = pyridine-3-acetic acid &gt; acifran &gt; 5-methyl nicotinic acid = acipimox &gt;&gt; nicotinuric acid = nicotinamide. This chain is Hydroxycarboxylic acid receptor 2 (Hcar2), found in Rattus norvegicus (Rat).